The sequence spans 177 residues: Interleukin-1 receptor antagonist protein (177 aa).

Positions 1–25 (MEVCRCHHGYLISLLLFLFHSETAC) are cleaved as a signal peptide. Cysteines 91 and 141 form a disulfide. Asn-109 and Asn-114 each carry an N-linked (GlcNAc...) asparagine glycan.

It belongs to the IL-1 family.

Its subcellular location is the secreted. In terms of biological role, anti-inflammatory antagonist of interleukin-1 family of proinflammatory cytokines such as interleukin-1beta/IL1B and interleukin-1alpha/IL1A. Protects from immune dysregulation and uncontrolled systemic inflammation triggered by IL1 for a range of innate stimulatory agents such as pathogens. The sequence is that of Interleukin-1 receptor antagonist protein (IL1RN) from Tursiops truncatus (Atlantic bottle-nosed dolphin).